The sequence spans 593 residues: Probable serine/threonine-protein kinase samkB (593 aa).

The SAM domain maps to 29–93; that stretch reads WNNEAVCEWL…SIFKKLKNNN (65 aa). The segment at 108–157 is disordered; that stretch reads ESNSINNSNNNNNNNNNNNNNNNNNNNNNNNNNNNNNNNNNNNNNNKIDT. The span at 113 to 153 shows a compositional bias: low complexity; the sequence is NNSNNNNNNNNNNNNNNNNNNNNNNNNNNNNNNNNNNNNNN. Residues 186–438 enclose the Protein kinase domain; sequence YKLIEEIGRG…SKQLLEAQWF (253 aa). ATP contacts are provided by residues 192–200 and Lys-216; that span reads IGRGAFSIV. The active-site Proton acceptor is the Asp-313.

The protein belongs to the protein kinase superfamily. Ser/Thr protein kinase family.

It catalyses the reaction L-seryl-[protein] + ATP = O-phospho-L-seryl-[protein] + ADP + H(+). The enzyme catalyses L-threonyl-[protein] + ATP = O-phospho-L-threonyl-[protein] + ADP + H(+). This is Probable serine/threonine-protein kinase samkB (samkB) from Dictyostelium discoideum (Social amoeba).